We begin with the raw amino-acid sequence, 459 residues long: Glutamyl-tRNA(Gln) amidotransferase subunit A, mitochondrial (459 aa).

Residues Lys37 and Ser114 each act as charge relay system in the active site. The active-site Acyl-ester intermediate is the Ser138.

Belongs to the amidase family. GatA subfamily. As to quaternary structure, subunit of the heterotrimeric GatFAB amidotransferase (AdT) complex, composed of A, B and F subunits.

The protein resides in the mitochondrion. The catalysed reaction is L-glutamyl-tRNA(Gln) + L-glutamine + ATP + H2O = L-glutaminyl-tRNA(Gln) + L-glutamate + ADP + phosphate + H(+). Allows the formation of correctly charged Gln-tRNA(Gln) through the transamidation of misacylated Glu-tRNA(Gln) in the mitochondria. The reaction takes place in the presence of glutamine and ATP through an activated gamma-phospho-Glu-tRNA(Gln). This chain is Glutamyl-tRNA(Gln) amidotransferase subunit A, mitochondrial, found in Yarrowia lipolytica (strain CLIB 122 / E 150) (Yeast).